The primary structure comprises 115 residues: Large ribosomal subunit protein uL24 (115 aa).

Disordered stretches follow at residues 45–77 (VRQSQKNPQGGRLNKEMPMSASNVMLVDPSTGK) and 96–115 (KASGESLGQIAPAKASKAAS).

It belongs to the universal ribosomal protein uL24 family. In terms of assembly, part of the 50S ribosomal subunit.

Functionally, one of two assembly initiator proteins, it binds directly to the 5'-end of the 23S rRNA, where it nucleates assembly of the 50S subunit. In terms of biological role, one of the proteins that surrounds the polypeptide exit tunnel on the outside of the subunit. This chain is Large ribosomal subunit protein uL24, found in Rhodopirellula baltica (strain DSM 10527 / NCIMB 13988 / SH1).